Here is a 319-residue protein sequence, read N- to C-terminus: Transmembrane protein 121 (319 aa).

7 helical membrane passes run 10–30 (HVCLTTLVIMGSMAVMDAYLV), 43–63 (IIVLVGDVCFLLVLRYVAVWV), 74–94 (YAMILWFLYIFVLEIKLYFIF), 112–132 (ALTLLLSVCVPGLFLLLVALD), 150–170 (LFWVALDLLDLLDMQASLWEP), 174–194 (GLPLWAEGLTFFYCYMLLLVL), and 214–234 (MMLYPVLSLATVNVVAVLARA). Over residues 277 to 306 (PALSLELQPPPPQRNSVPPPPPPLHGPPGR) the composition is skewed to pro residues. The interval 277-319 (PALSLELQPPPPQRNSVPPPPPPLHGPPGRPHMSSPTRDPLDT) is disordered.

It belongs to the TMEM121 family. Highly expressed in heart and detected in pancreas, liver and skeletal muscle.

Its subcellular location is the membrane. Functionally, may play a role in MAPK signaling. This chain is Transmembrane protein 121 (TMEM121), found in Homo sapiens (Human).